Here is a 582-residue protein sequence, read N- to C-terminus: tRNA-guanine(15) transglycosylase (582 aa).

The Nucleophile role is filled by D95. Positions 130 and 196 each coordinate substrate. Zn(2+)-binding residues include C279, C281, and C284. The region spanning 507 to 582 (RMRVVVNKEA…RAVKVRKGVE (76 aa)) is the PUA domain.

Belongs to the archaeosine tRNA-ribosyltransferase family. As to quaternary structure, homodimer. Zn(2+) is required as a cofactor.

The catalysed reaction is guanosine(15) in tRNA + 7-cyano-7-deazaguanine = 7-cyano-7-carbaguanosine(15) in tRNA + guanine. It functions in the pathway tRNA modification; archaeosine-tRNA biosynthesis. Its function is as follows. Exchanges the guanine residue with 7-cyano-7-deazaguanine (preQ0) at position 15 in the dihydrouridine loop (D-loop) of archaeal tRNAs. This chain is tRNA-guanine(15) transglycosylase (tgtA), found in Pyrococcus horikoshii (strain ATCC 700860 / DSM 12428 / JCM 9974 / NBRC 100139 / OT-3).